Reading from the N-terminus, the 312-residue chain is Phosphoribosylaminoimidazole-succinocarboxamide synthase (312 aa).

This sequence belongs to the SAICAR synthetase family.

It carries out the reaction 5-amino-1-(5-phospho-D-ribosyl)imidazole-4-carboxylate + L-aspartate + ATP = (2S)-2-[5-amino-1-(5-phospho-beta-D-ribosyl)imidazole-4-carboxamido]succinate + ADP + phosphate + 2 H(+). Its pathway is purine metabolism; IMP biosynthesis via de novo pathway; 5-amino-1-(5-phospho-D-ribosyl)imidazole-4-carboxamide from 5-amino-1-(5-phospho-D-ribosyl)imidazole-4-carboxylate: step 1/2. This is Phosphoribosylaminoimidazole-succinocarboxamide synthase from Legionella pneumophila (strain Paris).